Reading from the N-terminus, the 60-residue chain is Cytotoxin SP15c (60 aa).

Cystine bridges form between C3-C21, C14-C38, C42-C53, and C54-C59.

The protein belongs to the three-finger toxin family. Short-chain subfamily. Type IA cytotoxin sub-subfamily. As to quaternary structure, monomer in solution; Homodimer and oligomer in the presence of negatively charged lipids forming a pore with a size ranging between 20 and 30 Angstroms. As to expression, expressed by the venom gland.

It localises to the secreted. It is found in the target cell membrane. In terms of biological role, shows cytolytic activity on many different cells by forming pore in lipid membranes. In vivo, increases heart rate or kills the animal by cardiac arrest. In addition, it binds to heparin with high affinity, interacts with Kv channel-interacting protein 1 (KCNIP1) in a calcium-independent manner, and binds to integrin alpha-V/beta-3 (ITGAV/ITGB3) with moderate affinity. In Naja atra (Chinese cobra), this protein is Cytotoxin SP15c.